A 118-amino-acid chain; its full sequence is uncharacterized protein (118 aa).

3 helical membrane passes run 22–44 (IIAS…FSIA), 54–71 (LSPL…PVLR), and 78–99 (PILS…VEWL).

The protein resides in the cell membrane. This is an uncharacterized protein from Archaeoglobus fulgidus (strain ATCC 49558 / DSM 4304 / JCM 9628 / NBRC 100126 / VC-16).